The chain runs to 922 residues: Cell cycle and apoptosis regulator protein 2 (922 aa).

Positions M1–A39 are disordered. At T35 the chain carries Phosphothreonine. K112 bears the N6-acetyllysine; by KAT8 mark. K123 is modified (N6-methyllysine). The residue at position 124 (S124) is a Phosphoserine. 4 disordered regions span residues L178–H219, R280–S307, K446–V508, and V567–A638. At R180 the chain carries Omega-N-methylarginine. A compositionally biased stretch (basic and acidic residues) spans G188–S200. Position 215 is an N6-acetyllysine; by KAT8 (K215). The segment covering Q473–D491 has biased composition (polar residues). T483 carries the post-translational modification Phosphothreonine. S568 is modified (phosphoserine). The span at E571–V601 shows a compositional bias: basic and acidic residues. Residues E573–V596 are a coiled coil. K590 participates in a covalent cross-link: Glycyl lysine isopeptide (Lys-Gly) (interchain with G-Cter in SUMO2 and SUMO3); alternate. Residue K590 forms a Glycyl lysine isopeptide (Lys-Gly) (interchain with G-Cter in SUMO2); alternate linkage. The interaction with MCC stretch occupies residues E609–E669. 5 positions are modified to phosphoserine: S612, S626, S674, S677, and S680. Y684 carries the phosphotyrosine modification. 2 positions are modified to phosphoserine: S686 and S807. The tract at residues D703–N922 is interaction with NR1D1. The stretch at L828–L898 forms a coiled coil. T896 carries the phosphothreonine modification.

In terms of assembly, component of the DBIRD complex. Interacts with ZNF326/ZIRD; the interaction is direct. Interacts (via N-terminus) with SIRT1, which inhibits the deacetylation of substrates. Interacts (via N-terminus) with SUV39H1; this interaction abolishes the interaction with SIRT1. Component of a nuclear receptor-mediated transcription complex composed of at least ZNF335, CCAR2 and EMSY; the complex stimulates the transcription of nuclear receptor target genes such as SOX9 and HOXA1. Within the complex interacts with EMSY and interacts with ZNF335 (via C-terminus). Components of this complex may associate with components of a histone methylation complex to form a complex at least composed of ZNF335, HCFC1, CCAR2, EMSY, MKI67, RBBP5, ASH2L and WDR5. Within this complex, interacts with ASH2L. Interacts with NR1D1. Interacts (via N-terminus) with ESR1 and ESR2. Interacts (via N-terminus) with HDAC3 (via C-terminus). Interacts with HDAC1 and MED2F. Interacts with MCC. Interacts (via N-terminus) with NR1H2 and NR1H3 in a ligand-independent manner. Interacts with CSNK2A1. Interacts (via N-terminus) with p53/TP53. Interacts (via N-terminus) with BRCA1 (via the BRCT domains). Interacts (via N-terminus) with CHEK2 (via protein kinase domain). Interacts with PSEM3. Interacts (via N-terminus) with PSIA3 and SENP1. The sumoylated form shows a preferential interaction with SIRT1 as compared to its unmodified form. Interacts with CECR2; may form part of the CERF-1 and/or CEF-5 ISWI chromatin remodeling complexes in embryonic stem cells. Post-translationally, acetylation at Lys-112 and Lys-215 by KAT8 prevents inhibitory binding to SIRT1 and increases its deacetylase activity. Genotoxic stress induces its sumoylation and sumoylation promotes the SIRT1-CCAR2 interaction which in turn inhibits SIRT1-mediated deacetylation of p53/TP53. Sumoylation leads to transcriptional activation of p53/TP53 by sequestering SIRT1 from p53/TP53. Desumoylated by SENP1.

It localises to the nucleus. The protein localises to the cytoplasm. Its subcellular location is the cytoskeleton. The protein resides in the spindle. Core component of the DBIRD complex, a multiprotein complex that acts at the interface between core mRNP particles and RNA polymerase II (RNAPII) and integrates transcript elongation with the regulation of alternative splicing: the DBIRD complex affects local transcript elongation rates and alternative splicing of a large set of exons embedded in (A + T)-rich DNA regions. Inhibits SIRT1 deacetylase activity leading to increasing levels of p53/TP53 acetylation and p53-mediated apoptosis. Inhibits SUV39H1 methyltransferase activity. Mediates ligand-dependent transcriptional activation by nuclear hormone receptors. Plays a critical role in maintaining genomic stability and cellular integrity following UV-induced genotoxic stress. Regulates the circadian expression of the core clock components NR1D1 and BMAL1. Enhances the transcriptional repressor activity of NR1D1 through stabilization of NR1D1 protein levels by preventing its ubiquitination and subsequent degradation. Represses the ligand-dependent transcriptional activation function of ESR2. Acts as a regulator of PCK1 expression and gluconeogenesis by a mechanism that involves, at least in part, both NR1D1 and SIRT1. Negatively regulates the deacetylase activity of HDAC3 and can alter its subcellular localization. Positively regulates the beta-catenin pathway (canonical Wnt signaling pathway) and is required for MCC-mediated repression of the beta-catenin pathway. Represses ligand-dependent transcriptional activation function of NR1H2 and NR1H3 and inhibits the interaction of SIRT1 with NR1H3. Plays an important role in tumor suppression through p53/TP53 regulation; stabilizes p53/TP53 by affecting its interaction with ubiquitin ligase MDM2. Represses the transcriptional activator activity of BRCA1. Inhibits SIRT1 in a CHEK2 and PSEM3-dependent manner and inhibits the activity of CHEK2 in vitro. This Mus musculus (Mouse) protein is Cell cycle and apoptosis regulator protein 2 (Ccar2).